The sequence spans 445 residues: 3-phosphoshikimate 1-carboxyvinyltransferase (445 aa).

A disordered region spans residues 1-25 (MSHSDQTSPLEARKSAALSGTARVP). Residues Lys-28, Ser-29, and Arg-33 each coordinate 3-phosphoshikimate. Phosphoenolpyruvate is bound at residue Lys-28. Phosphoenolpyruvate is bound by residues Gly-101 and Arg-129. Positions 175, 177, 328, and 355 each coordinate 3-phosphoshikimate. Gln-177 contacts phosphoenolpyruvate. The active-site Proton acceptor is the Asp-328. Residues Arg-359 and Arg-402 each contribute to the phosphoenolpyruvate site.

Belongs to the EPSP synthase family. In terms of assembly, monomer.

The protein localises to the cytoplasm. The catalysed reaction is 3-phosphoshikimate + phosphoenolpyruvate = 5-O-(1-carboxyvinyl)-3-phosphoshikimate + phosphate. The protein operates within metabolic intermediate biosynthesis; chorismate biosynthesis; chorismate from D-erythrose 4-phosphate and phosphoenolpyruvate: step 6/7. In terms of biological role, catalyzes the transfer of the enolpyruvyl moiety of phosphoenolpyruvate (PEP) to the 5-hydroxyl of shikimate-3-phosphate (S3P) to produce enolpyruvyl shikimate-3-phosphate and inorganic phosphate. This Rhodopseudomonas palustris (strain BisB5) protein is 3-phosphoshikimate 1-carboxyvinyltransferase.